The primary structure comprises 225 residues: NAD(P)H-quinone oxidoreductase subunit K, chloroplastic (225 aa).

Residues Cys43, Cys44, Cys108, and Cys139 each coordinate [4Fe-4S] cluster.

Belongs to the complex I 20 kDa subunit family. In terms of assembly, NDH is composed of at least 16 different subunits, 5 of which are encoded in the nucleus. Requires [4Fe-4S] cluster as cofactor.

The protein resides in the plastid. The protein localises to the chloroplast thylakoid membrane. The enzyme catalyses a plastoquinone + NADH + (n+1) H(+)(in) = a plastoquinol + NAD(+) + n H(+)(out). It catalyses the reaction a plastoquinone + NADPH + (n+1) H(+)(in) = a plastoquinol + NADP(+) + n H(+)(out). In terms of biological role, NDH shuttles electrons from NAD(P)H:plastoquinone, via FMN and iron-sulfur (Fe-S) centers, to quinones in the photosynthetic chain and possibly in a chloroplast respiratory chain. The immediate electron acceptor for the enzyme in this species is believed to be plastoquinone. Couples the redox reaction to proton translocation, and thus conserves the redox energy in a proton gradient. The chain is NAD(P)H-quinone oxidoreductase subunit K, chloroplastic from Helianthus annuus (Common sunflower).